The following is a 241-amino-acid chain: MNSFTSALRPGPLGCSLALLLVVATAFPTSAPVREDSNTKASPDKTLTPPGRTIESIRSILETIKELRKEMCDHDVNCMNRKEALAEVNLHLPRLIEEDGCFPPAVNNETCLLRITSGLMEFRMYLEHLQAKFRSDEENTRVSMVLKNIQHLIKTLRPKVKNLNEEATLKPAVAVSLMENLQQKNQWLKTTTIHFILRGLTNFLEFTLRAVDLMECGCPCLRNFMGSASHGQNTPSCPLDT.

The signal sequence occupies residues 1–26 (MNSFTSALRPGPLGCSLALLLVVATA). A disordered region spans residues 32 to 51 (PVREDSNTKASPDKTLTPPG). 2 cysteine pairs are disulfide-bonded: cysteine 72/cysteine 78 and cysteine 101/cysteine 111. Residue asparagine 108 is glycosylated (N-linked (GlcNAc...) asparagine).

The protein belongs to the IL-6 superfamily. Component of a hexamer of two molecules each of IL6, IL6R and IL6ST; first binds to IL6R to associate with the signaling subunit IL6ST. Interacts with IL6R (via the N-terminal ectodomain); this interaction may be affected by IL6R-binding with SORL1, hence decreasing IL6 cis signaling. Interacts with SORL1 (via the N-terminal ectodomain); this interaction leads to IL6 internalization and lysosomal degradation. May form a trimeric complex with the soluble SORL1 ectodomain and soluble IL6R receptor; this interaction might stabilize circulating IL6, hence promoting IL6 trans signaling.

The protein resides in the secreted. Cytokine with a wide variety of biological functions in immunity, tissue regeneration, and metabolism. Binds to IL6R, then the complex associates to the signaling subunit IL6ST/gp130 to trigger the intracellular IL6-signaling pathway. The interaction with the membrane-bound IL6R and IL6ST stimulates 'classic signaling', whereas the binding of IL6 and soluble IL6R to IL6ST stimulates 'trans-signaling'. Alternatively, 'cluster signaling' occurs when membrane-bound IL6:IL6R complexes on transmitter cells activate IL6ST receptors on neighboring receiver cells. Its function is as follows. IL6 is a potent inducer of the acute phase response. Rapid production of IL6 contributes to host defense during infection and tissue injury, but excessive IL6 synthesis is involved in disease pathology. In the innate immune response, is synthesized by myeloid cells, such as macrophages and dendritic cells, upon recognition of pathogens through toll-like receptors (TLRs) at the site of infection or tissue injury. In the adaptive immune response, is required for the differentiation of B cells into immunoglobulin-secreting cells. Plays a major role in the differentiation of CD4(+) T cell subsets. Essential factor for the development of T follicular helper (Tfh) cells that are required for the induction of germinal-center formation. Required to drive naive CD4(+) T cells to the Th17 lineage. Also required for proliferation of myeloma cells and the survival of plasmablast cells. In terms of biological role, acts as an essential factor in bone homeostasis and on vessels directly or indirectly by induction of VEGF, resulting in increased angiogenesis activity and vascular permeability. Induces, through 'trans-signaling' and synergistically with IL1B and TNF, the production of VEGF. Involved in metabolic controls, is discharged into the bloodstream after muscle contraction increasing lipolysis and improving insulin resistance. 'Trans-signaling' in central nervous system also regulates energy and glucose homeostasis. Mediates, through GLP-1, crosstalk between insulin-sensitive tissues, intestinal L cells and pancreatic islets to adapt to changes in insulin demand. Also acts as a myokine. Plays a protective role during liver injury, being required for maintenance of tissue regeneration. Also has a pivotal role in iron metabolism by regulating HAMP/hepcidin expression upon inflammation or bacterial infection. Through activation of IL6ST-YAP-NOTCH pathway, induces inflammation-induced epithelial regeneration. The chain is Interleukin-6 (IL6) from Oryctolagus cuniculus (Rabbit).